The primary structure comprises 278 residues: Shikimate dehydrogenase (NADP(+)) (278 aa).

Shikimate-binding positions include 14–16 (SKS) and T61. The Proton acceptor role is filled by K65. 2 residues coordinate shikimate: N86 and D102. Residues 127 to 131 (GAGGA), 151 to 156 (NRTASK), and M221 each bind NADP(+). Position 223 (Y223) interacts with shikimate. G245 provides a ligand contact to NADP(+).

This sequence belongs to the shikimate dehydrogenase family. Homodimer.

It carries out the reaction shikimate + NADP(+) = 3-dehydroshikimate + NADPH + H(+). The protein operates within metabolic intermediate biosynthesis; chorismate biosynthesis; chorismate from D-erythrose 4-phosphate and phosphoenolpyruvate: step 4/7. Functionally, involved in the biosynthesis of the chorismate, which leads to the biosynthesis of aromatic amino acids. Catalyzes the reversible NADPH linked reduction of 3-dehydroshikimate (DHSA) to yield shikimate (SA). This Saccharophagus degradans (strain 2-40 / ATCC 43961 / DSM 17024) protein is Shikimate dehydrogenase (NADP(+)).